The primary structure comprises 154 residues: MTFHFLLLLSRQGKTRLTKWYSPFTNKEKSRFTREIGNMVLNRPPKLCNFLEWKEYKIIFKRYASLYFVVCCDREDNELIVLEIIHHFVEILDRYFGNVCELDLIFNFHKAYYILDELIMAGELQETSKKTVLRLISQQDTLLEGGPGEHKVDL.

It belongs to the adaptor complexes small subunit family. As to quaternary structure, adaptor protein complex 1 (AP-1) is a heterotetramer composed of two large adaptins (gamma-type subunit and beta-type subunit), a medium adaptin (mu-type subunit) and a small adaptin (sigma-type subunit).

It is found in the golgi apparatus. It localises to the trans-Golgi network. The protein localises to the cytoplasmic vesicle. The protein resides in the clathrin-coated vesicle membrane. Its function is as follows. Subunit of clathrin-associated adaptor protein complex 1 that plays a role in protein sorting in the trans-Golgi network (TGN) and endosomes. The AP complexes mediate the recruitment of clathrin to membranes and the recognition of sorting signals within the cytosolic tails of transmembrane cargo molecules. Also involved in early steps of phagocytosis and macropinocytosis. The chain is AP-1 complex subunit sigma-2 (ap1s2) from Dictyostelium discoideum (Social amoeba).